Reading from the N-terminus, the 70-residue chain is Turripeptide Pal9.2 (70 aa).

An N-terminal signal peptide occupies residues 1 to 20; it reads MKVYCLLVVLLVGLVSQTQG. The 50-residue stretch at 21 to 70 folds into the Kazal-like domain; sequence QLDKKCNMACTLDYRPVCGSDGKTYPNRCALTSTACESQQSITVLHDGEC. 3 disulfide bridges follow: cysteine 26/cysteine 56, cysteine 30/cysteine 49, and cysteine 38/cysteine 70.

The protein belongs to the conopeptide P-like superfamily. As to expression, expressed by the venom duct.

Its subcellular location is the secreted. Functionally, acts as a neurotoxin by inhibiting an ion channel. May also act as a serine protease inhibitor, since it possess the kazal serine protease inhibitor signature. In Polystira albida (White giant-turris), this protein is Turripeptide Pal9.2.